A 323-amino-acid chain; its full sequence is Protein translocase subunit SecF (323 aa).

The Cytoplasmic segment spans residues 1–22; it reads MAQEYTVEQLNHGRKVYDFMRW. The helical transmembrane segment at 23–43 threads the bilayer; it reads DYWAFGISGLLLIAAIVIMGV. Over 44 to 142 the chain is Periplasmic; sequence RGFNWGLDFT…FVGPSVGADL (99 aa). Residues 143–163 traverse the membrane as a helical segment; that stretch reads AQTGAMALMAALLSILVYVGF. The Cytoplasmic portion of the chain corresponds to 164-170; it reads RFEWRLA. Residues 171–191 form a helical membrane-spanning segment; that stretch reads AGVVIALAHDVIITLGILSLF. Residues 192-196 are Periplasmic-facing; the sequence is HIEID. The helical transmembrane segment at 197 to 217 threads the bilayer; that stretch reads LTIVASLMSVIGYSLNDSIVV. At 218 to 247 the chain is on the cytoplasmic side; that stretch reads SDRIRENFRKIRRGTPYEIFNVSLTQTLHR. Residues 248 to 270 form a helical membrane-spanning segment; sequence TLITSGTTLMVILMLYLFGGPVL. The Periplasmic portion of the chain corresponds to 271-280; it reads EGFSLTMLIG. The chain crosses the membrane as a helical span at residues 281–301; that stretch reads VSIGTASSIYVASALALKLGM. Residues 302 to 323 lie on the Cytoplasmic side of the membrane; it reads KREHMLQQKVEKEGADQPSILP.

This sequence belongs to the SecD/SecF family. SecF subfamily. Forms a complex with SecD. Part of the essential Sec protein translocation apparatus which comprises SecA, SecYEG and auxiliary proteins SecDF-YajC and YidC.

Its subcellular location is the cell inner membrane. Its function is as follows. Part of the Sec protein translocase complex. Interacts with the SecYEG preprotein conducting channel. SecDF uses the proton motive force (PMF) to complete protein translocation after the ATP-dependent function of SecA. The protein is Protein translocase subunit SecF of Escherichia coli O157:H7.